Here is a 101-residue protein sequence, read N- to C-terminus: Small ribosomal subunit protein uS14 (101 aa).

Belongs to the universal ribosomal protein uS14 family. As to quaternary structure, part of the 30S ribosomal subunit. Contacts proteins S3 and S10.

Functionally, binds 16S rRNA, required for the assembly of 30S particles and may also be responsible for determining the conformation of the 16S rRNA at the A site. The polypeptide is Small ribosomal subunit protein uS14 (Caulobacter vibrioides (strain ATCC 19089 / CIP 103742 / CB 15) (Caulobacter crescentus)).